Reading from the N-terminus, the 644-residue chain is Biosynthetic arginine decarboxylase (644 aa).

Lys100 carries the post-translational modification N6-(pyridoxal phosphate)lysine. 282 to 292 (CDVGGGLAIDY) lines the substrate pocket.

This sequence belongs to the Orn/Lys/Arg decarboxylase class-II family. SpeA subfamily. Mg(2+) serves as cofactor. It depends on pyridoxal 5'-phosphate as a cofactor.

It carries out the reaction L-arginine + H(+) = agmatine + CO2. Functionally, catalyzes the biosynthesis of agmatine from arginine. This chain is Biosynthetic arginine decarboxylase, found in Gloeobacter violaceus (strain ATCC 29082 / PCC 7421).